A 313-amino-acid polypeptide reads, in one-letter code: Porphobilinogen deaminase (313 aa).

C241 carries the post-translational modification S-(dipyrrolylmethanemethyl)cysteine.

This sequence belongs to the HMBS family. Monomer. The cofactor is dipyrromethane.

It carries out the reaction 4 porphobilinogen + H2O = hydroxymethylbilane + 4 NH4(+). It functions in the pathway porphyrin-containing compound metabolism; protoporphyrin-IX biosynthesis; coproporphyrinogen-III from 5-aminolevulinate: step 2/4. It participates in porphyrin-containing compound metabolism; chlorophyll biosynthesis. Tetrapolymerization of the monopyrrole PBG into the hydroxymethylbilane pre-uroporphyrinogen in several discrete steps. The chain is Porphobilinogen deaminase from Chlorobium phaeovibrioides (strain DSM 265 / 1930) (Prosthecochloris vibrioformis (strain DSM 265)).